Consider the following 782-residue polypeptide: Protein VAC14 homolog (782 aa).

Met1 bears the N-acetylmethionine mark. HEAT repeat units lie at residues 5–42, 89–126, 171–208, and 212–249; these read KDFAPLTPNIVRALNDKLYEKRKVAALEIEKLVREFVA, LYLKELIEPVLTCFNDADSRLRYYACEALYNIVKVARG, FDLVSFIPLLRERIYSNNQYARQFIISWILVLESVPDI, and DYLPEILDGLFQILGDNGKEIRKMCEVVLGEFLKEIKK. A Phosphothreonine modification is found at Thr11. Disordered regions lie at residues 335–372 and 471–517; these read EDDELDELRPGQRQAEPTPDDALPKQEGTASGGPDGSC and SSPA…LECS. The HEAT 5 repeat unit spans residues 438-475; that stretch reads RHTDSLFPILLQTLSDESDEVILKDLEVLAEIASSPAG. Residues 478-488 are compositionally biased toward low complexity; the sequence is DDPGPLDGPDL. Phosphothreonine is present on Thr499. Positions 506–517 are enriched in polar residues; that stretch reads LNTSGTKGLECS. Ser517 carries the phosphoserine modification. An HEAT 6 repeat occupies 560–598; sequence LNAENIFHSMADILLREEDLKFASTMVHALNTILLTSTE. Ser743 bears the Phosphoserine mark. Positions 773-777 are mediates interaction with the PDZ domain of NOS1; that stretch reads GDHLD.

Belongs to the VAC14 family. Forms pentamers. Component of the PI(3,5)P2 regulatory complex/PAS complex, at least composed of PIKFYVE, FIG4 and VAC14. VAC14 nucleates the assembly of the complex and serves as a scaffold by pentamerizing into a star-shaped structure, which can bind a single copy each of PIKFYVE and FIG4 and coordinates their activities. Interacts with NOS1. In terms of assembly, (Microbial infection) Interacts with HTLV-1 Tax. As to expression, ubiquitously expressed.

Its subcellular location is the endosome membrane. The protein resides in the microsome membrane. Its function is as follows. Scaffold protein component of the PI(3,5)P2 regulatory complex which regulates both the synthesis and turnover of phosphatidylinositol 3,5-bisphosphate (PtdIns(3,5)P2). Pentamerizes into a star-shaped structure and nucleates the assembly of the complex. The pentamer binds a single copy each of PIKFYVE and FIG4 and coordinates both PIKfyve kinase activity and FIG4 phosphatase activity, being required to maintain normal levels of phosphatidylinositol 3-phosphate (PtdIns(3)P) and phosphatidylinositol 5-phosphate (PtdIns(5)P). Plays a role in the biogenesis of endosome carrier vesicles (ECV) / multivesicular bodies (MVB) transport intermediates from early endosomes. The polypeptide is Protein VAC14 homolog (VAC14) (Homo sapiens (Human)).